We begin with the raw amino-acid sequence, 302 residues long: Bifunctional phosphoglucose/phosphomannose isomerase (302 aa).

In terms of domain architecture, SIS spans valine 27–proline 160. Glycine 47, serine 48, serine 87, serine 89, threonine 92, and arginine 135 together coordinate D-fructose 6-phosphate. D-glucose 6-phosphate is bound by residues glycine 47, serine 48, serine 87, serine 89, threonine 92, and arginine 135. The Proton acceptor role is filled by glutamate 203. The D-fructose 6-phosphate site is built by histidine 219 and lysine 298. D-glucose 6-phosphate is bound by residues histidine 219 and lysine 298. Histidine 219 functions as the Proton donor in the catalytic mechanism. Lysine 298 (proton acceptor) is an active-site residue.

This sequence belongs to the PGI/PMI family. Homodimer.

It localises to the cytoplasm. The catalysed reaction is alpha-D-glucose 6-phosphate = beta-D-fructose 6-phosphate. It catalyses the reaction D-mannose 6-phosphate = D-fructose 6-phosphate. Its activity is regulated as follows. Inhibited by 5-phosphoarabinonate (PAB) and 6-phosphogluconate. Dual specificity isomerase that catalyzes the isomerization of both glucose-6-phosphate and mannose-6-phosphate to fructose-6-phosphate with similar catalytic efficiency. This Pyrobaculum aerophilum (strain ATCC 51768 / DSM 7523 / JCM 9630 / CIP 104966 / NBRC 100827 / IM2) protein is Bifunctional phosphoglucose/phosphomannose isomerase.